We begin with the raw amino-acid sequence, 217 residues long: Dual specificity phosphatase 29 (217 aa).

The Tyrosine-protein phosphatase domain maps to 46–194 (HVNEVWPNLY…LRELDIKLAL (149 aa)). 138 to 145 (HCAMGRSR) is a substrate binding site. Cys-139 functions as the Phosphocysteine intermediate in the catalytic mechanism.

This sequence belongs to the protein-tyrosine phosphatase family. Non-receptor class dual specificity subfamily.

Its subcellular location is the cytoplasm. The protein localises to the nucleus. The enzyme catalyses O-phospho-L-tyrosyl-[protein] + H2O = L-tyrosyl-[protein] + phosphate. It carries out the reaction O-phospho-L-seryl-[protein] + H2O = L-seryl-[protein] + phosphate. It catalyses the reaction O-phospho-L-threonyl-[protein] + H2O = L-threonyl-[protein] + phosphate. Its function is as follows. Dual specificity phosphatase able to dephosphorylate phosphotyrosine, phosphoserine and phosphothreonine residues within the same substrate, with a preference for phosphotyrosine as a substrate. Involved in the modulation of AMPK and MAPK1/2 signaling pathways. The chain is Dual specificity phosphatase 29 (DUSP29) from Anolis carolinensis (Green anole).